We begin with the raw amino-acid sequence, 366 residues long: sn-glycerol-3-phosphate import ATP-binding protein UgpC (366 aa).

The ABC transporter domain maps to V4–I235. G37–S44 serves as a coordination point for ATP.

This sequence belongs to the ABC transporter superfamily. sn-glycerol-3-phosphate importer (TC 3.A.1.1.3) family. As to quaternary structure, the complex is composed of two ATP-binding proteins (UgpC), two transmembrane proteins (UgpA and UgpE) and a solute-binding protein (UgpB).

The protein localises to the cell inner membrane. It carries out the reaction sn-glycerol 3-phosphate(out) + ATP + H2O = sn-glycerol 3-phosphate(in) + ADP + phosphate + H(+). Its function is as follows. Part of the ABC transporter complex UgpBAEC involved in sn-glycerol-3-phosphate (G3P) import. Responsible for energy coupling to the transport system. This chain is sn-glycerol-3-phosphate import ATP-binding protein UgpC, found in Rhodopseudomonas palustris (strain BisB18).